Consider the following 206-residue polypeptide: Protein-methionine-sulfoxide reductase heme-binding subunit MsrQ (206 aa).

4 helical membrane-spanning segments follow: residues 8–28, 82–102, 116–136, and 153–173; these read IVWLKVLLHLAGLLPFLWLVW, LWCFAWATLHLTSYALLELGI, PYLTLGIISWFILFALTLTST, and FVYLVAILAPIHYLWSVKILS.

It belongs to the MsrQ family. In terms of assembly, heterodimer of a catalytic subunit (MsrP) and a heme-binding subunit (MsrQ). The cofactor is FMN. Heme b serves as cofactor.

It is found in the cell inner membrane. Part of the MsrPQ system that repairs oxidized periplasmic proteins containing methionine sulfoxide residues (Met-O), using respiratory chain electrons. Thus protects these proteins from oxidative-stress damage caused by reactive species of oxygen and chlorine generated by the host defense mechanisms. MsrPQ is essential for the maintenance of envelope integrity under bleach stress, rescuing a wide series of structurally unrelated periplasmic proteins from methionine oxidation. MsrQ provides electrons for reduction to the reductase catalytic subunit MsrP, using the quinone pool of the respiratory chain. The polypeptide is Protein-methionine-sulfoxide reductase heme-binding subunit MsrQ (Citrobacter koseri (strain ATCC BAA-895 / CDC 4225-83 / SGSC4696)).